Consider the following 197-residue polypeptide: Dephospho-CoA kinase (197 aa).

Positions 4–197 constitute a DPCK domain; the sequence is RLGLTGSIGM…RQIRAGNIHA (194 aa). 12 to 17 serves as a coordination point for ATP; it reads GMGKST.

Belongs to the CoaE family.

The protein resides in the cytoplasm. The enzyme catalyses 3'-dephospho-CoA + ATP = ADP + CoA + H(+). It participates in cofactor biosynthesis; coenzyme A biosynthesis; CoA from (R)-pantothenate: step 5/5. In terms of biological role, catalyzes the phosphorylation of the 3'-hydroxyl group of dephosphocoenzyme A to form coenzyme A. This is Dephospho-CoA kinase from Ruegeria pomeroyi (strain ATCC 700808 / DSM 15171 / DSS-3) (Silicibacter pomeroyi).